We begin with the raw amino-acid sequence, 790 residues long: N-methylputrescine oxidase 1, peroxisomal (790 aa).

Residues 1-23 (MATTKQKVTAPSPSPSSSTASCC) are disordered. Low complexity predominate over residues 9–23 (TAPSPSPSSSTASCC). 423–434 (AFDAGEDGLGKN) serves as a coordination point for substrate. Asp-425 serves as the catalytic Proton acceptor. Cysteines 444 and 470 form a disulfide. 506-511 (VANYEY) serves as a coordination point for substrate. Catalysis depends on Tyr-509, which acts as the Schiff-base intermediate with substrate; via topaquinone. Position 509 is a 2',4',5'-topaquinone (Tyr-509). Cu cation-binding residues include His-559 and His-561. Residues Asp-714 and Ile-715 each contribute to the Mn(2+) site. His-725 provides a ligand contact to Cu cation.

This sequence belongs to the copper/topaquinone oxidase family. Homodimer. Cu cation is required as a cofactor. It depends on Zn(2+) as a cofactor. Requires L-topaquinone as cofactor. Topaquinone (TPQ) is generated by copper-dependent autoxidation of a specific tyrosyl residue. In terms of tissue distribution, mainly expressed in roots, and, to a lower extent, in stems.

The protein localises to the peroxisome. It catalyses the reaction a primary methyl amine + O2 + H2O = an aldehyde + H2O2 + NH4(+). It carries out the reaction N-methylputrescine + O2 + H2O = 4-methylaminobutanal + H2O2 + NH4(+). The protein operates within alkaloid biosynthesis; nicotine biosynthesis. Functionally, involved in the biosynthesis of pyridine alkaloid natural products, leading mainly to the production of anabasine, anatabine, nicotine and nornicotine, effective deterrents against herbivores with antiparasitic and pesticide properties (neurotoxins); nornicotine serves as the precursor in the synthesis of the carcinogen compound N'-nitrosonornicotine (NNN). Amine oxidase which mediates the deamination of N-methylputrescine to produce 4-methylaminobutanal. Oxidizes preferentially N-methylated amines. This is N-methylputrescine oxidase 1, peroxisomal from Nicotiana tabacum (Common tobacco).